A 490-amino-acid polypeptide reads, in one-letter code: Probable G-protein coupled receptor npr-8 (490 aa).

Residues 1-55 (MEVKDIDNYCDRGISPNASNYLTYPFDGLCLQKFFYQLQTSLRRFTPYEEIIYTT) are Extracellular-facing. N-linked (GlcNAc...) asparagine glycosylation occurs at asparagine 17. A helical transmembrane segment spans residues 56–76 (VYIIISVAAVIGNGLVIMAVV). The Cytoplasmic segment spans residues 77 to 86 (RKKTMRTNRN). Residues 87–107 (VLILNLALSNLILAITNIPFL) traverse the membrane as a helical segment. Over 108 to 125 (WLPSIDFEFPYSRFFCKF) the chain is Extracellular. The chain crosses the membrane as a helical span at residues 126-146 (ANVLPGSNIYCSTLTISVMAI). Residues 147 to 166 (DRYYSVKKLKIASNRKQCFH) are Cytoplasmic-facing. Residues 167 to 187 (AVLVSLAIWIVSFILSLPLLL) traverse the membrane as a helical segment. The Extracellular segment spans residues 188 to 236 (YYETSMLYVMREIRVVDQSGQEVIRSYGWRQCRLVSAGRLPDITQSIQL). The chain crosses the membrane as a helical span at residues 237 to 257 (LMSILQVAFLYIVPLFVLSIF). Residues 258-331 (NVKLTRFLKT…QRTNRTTSLL (74 aa)) are Cytoplasmic-facing. The segment at 272–322 (MSKTRAPPKRFDRSDSHHNSLKNNNNHTSSLRSPSMPSIRSSITERNKTNQ) is disordered. Over residues 280 to 289 (KRFDRSDSHH) the composition is skewed to basic and acidic residues. Low complexity predominate over residues 292–313 (LKNNNNHTSSLRSPSMPSIRSS). Residues 332–352 (IAMAGSYAALWFPFTLITFLI) form a helical membrane-spanning segment. Over 353–374 (DFELIINQDYVNLVERIDQTCK) the chain is Extracellular. Residues 375-395 (MVSMLSICVNPFLYGFLNTNF) form a helical membrane-spanning segment. At 396 to 490 (RHEFSDIYYR…DDDIEKDSFV (95 aa)) the chain is on the cytoplasmic side.

It belongs to the G-protein coupled receptor 1 family.

The protein localises to the cell membrane. Functionally, not known. Putative receptor. The protein is Probable G-protein coupled receptor npr-8 of Caenorhabditis elegans.